Here is a 247-residue protein sequence, read N- to C-terminus: Uridylate kinase (247 aa).

An ATP-binding site is contributed by 17–20; that stretch reads KFSG. Gly59 is a binding site for UMP. Residues Gly60 and Arg64 each contribute to the ATP site. UMP is bound by residues Asp79 and 140–147; that span reads TGNPFFTT. ATP is bound by residues Thr167, Tyr173, and Asp176.

This sequence belongs to the UMP kinase family. As to quaternary structure, homohexamer.

It is found in the cytoplasm. It catalyses the reaction UMP + ATP = UDP + ADP. The protein operates within pyrimidine metabolism; CTP biosynthesis via de novo pathway; UDP from UMP (UMPK route): step 1/1. Its activity is regulated as follows. Inhibited by UTP. Functionally, catalyzes the reversible phosphorylation of UMP to UDP. The chain is Uridylate kinase from Legionella pneumophila (strain Lens).